A 386-amino-acid chain; its full sequence is Heat-inducible transcription repressor HrcA (386 aa).

The protein belongs to the HrcA family.

Negative regulator of class I heat shock genes (grpE-dnaK-dnaJ and groELS operons). Prevents heat-shock induction of these operons. This chain is Heat-inducible transcription repressor HrcA, found in Chlamydia caviae (strain ATCC VR-813 / DSM 19441 / 03DC25 / GPIC) (Chlamydophila caviae).